The chain runs to 616 residues: Probable Xaa-Pro aminopeptidase P (616 aa).

Positions 413, 424, 522, and 536 each coordinate Mn(2+).

The protein belongs to the peptidase M24B family. The cofactor is Mn(2+).

It carries out the reaction Release of any N-terminal amino acid, including proline, that is linked to proline, even from a dipeptide or tripeptide.. Catalyzes the removal of a penultimate prolyl residue from the N-termini of peptides. In Paracoccidioides brasiliensis (strain Pb18), this protein is Probable Xaa-Pro aminopeptidase P (AMPP).